A 427-amino-acid chain; its full sequence is Sperm-associated antigen 1A (427 aa).

A disordered region spans residues 46–113; that stretch reads QKKGPGYREG…GPGSAGESCN (68 aa). 6 TPR repeats span residues 125–158, 167–200, 202–234, 302–335, 336–369, and 371–403; these read LARL…CIEA, CVLY…HPFS, KPLL…DISV, FTIL…KPNE, CAIY…EPKN, and KAFY…DPNV.

The protein localises to the cytoplasm. It localises to the dynein axonemal particle. Functionally, may play a role in the cytoplasmic assembly and/or trafficking of the axonemal dynein arms. The chain is Sperm-associated antigen 1A (spag1a) from Danio rerio (Zebrafish).